Here is a 247-residue protein sequence, read N- to C-terminus: Adenosylcobinamide-GDP ribazoletransferase (247 aa).

A run of 5 helical transmembrane segments spans residues 34–54 (IITF…VFMV), 59–79 (CGVP…TGGF), 113–133 (GGLA…ELAL), 138–158 (ILAL…LLMY), and 194–214 (VLLP…AIFI).

This sequence belongs to the CobS family. It depends on Mg(2+) as a cofactor.

It localises to the cell inner membrane. The catalysed reaction is alpha-ribazole + adenosylcob(III)inamide-GDP = adenosylcob(III)alamin + GMP + H(+). It carries out the reaction alpha-ribazole 5'-phosphate + adenosylcob(III)inamide-GDP = adenosylcob(III)alamin 5'-phosphate + GMP + H(+). Its pathway is cofactor biosynthesis; adenosylcobalamin biosynthesis; adenosylcobalamin from cob(II)yrinate a,c-diamide: step 7/7. Joins adenosylcobinamide-GDP and alpha-ribazole to generate adenosylcobalamin (Ado-cobalamin). Also synthesizes adenosylcobalamin 5'-phosphate from adenosylcobinamide-GDP and alpha-ribazole 5'-phosphate. This Shigella boydii serotype 4 (strain Sb227) protein is Adenosylcobinamide-GDP ribazoletransferase.